We begin with the raw amino-acid sequence, 388 residues long: Protein RMD5 homolog (388 aa).

The LisH domain occupies 112–144 (DTHIVNQIIANFFYRQGMFDIGDCFVAETGESE). The CTLH domain occupies 150-207 (SFVEMYRILEAMKRRDLEPALNWAVSNSDKLKEARSDLEMKLHSLHFLEIARGKNSKE). Residues 330 to 374 (CPVSKEQSSDDNPPMMMSCGHVLCKQTINKMSKNGSKSSFKCPYC) form an RING-Gid-type zinc finger.

Interacts with RANBPM.

Its subcellular location is the cytoplasm. In Arabidopsis thaliana (Mouse-ear cress), this protein is Protein RMD5 homolog.